We begin with the raw amino-acid sequence, 355 residues long: tRNA N6-adenosine threonylcarbamoyltransferase (355 aa).

Residues His110 and His114 each contribute to the Fe cation site. Residues 132–136 (LVSGG), Asp165, Gly178, Asp182, and Asn288 contribute to the substrate site. Asp316 is a binding site for Fe cation.

This sequence belongs to the KAE1 / TsaD family. Fe(2+) is required as a cofactor.

The protein localises to the cytoplasm. The enzyme catalyses L-threonylcarbamoyladenylate + adenosine(37) in tRNA = N(6)-L-threonylcarbamoyladenosine(37) in tRNA + AMP + H(+). Required for the formation of a threonylcarbamoyl group on adenosine at position 37 (t(6)A37) in tRNAs that read codons beginning with adenine. Is involved in the transfer of the threonylcarbamoyl moiety of threonylcarbamoyl-AMP (TC-AMP) to the N6 group of A37, together with TsaE and TsaB. TsaD likely plays a direct catalytic role in this reaction. The sequence is that of tRNA N6-adenosine threonylcarbamoyltransferase from Lawsonia intracellularis (strain PHE/MN1-00).